Reading from the N-terminus, the 569-residue chain is Urease subunit alpha (569 aa).

In terms of domain architecture, Urease spans 131 to 569 (GGFDAHIHFI…LPLAQRYFMY (439 aa)). Residues His136, His138, and Lys219 each contribute to the Ni(2+) site. Lys219 carries the N6-carboxylysine modification. His221 lines the substrate pocket. His248 and His274 together coordinate Ni(2+). Residue His322 is the Proton donor of the active site. Asp362 is a Ni(2+) binding site.

This sequence belongs to the metallo-dependent hydrolases superfamily. Urease alpha subunit family. In terms of assembly, heterotrimer of UreA (gamma), UreB (beta) and UreC (alpha) subunits. Three heterotrimers associate to form the active enzyme. The cofactor is Ni cation. Post-translationally, carboxylation allows a single lysine to coordinate two nickel ions.

It localises to the cytoplasm. It carries out the reaction urea + 2 H2O + H(+) = hydrogencarbonate + 2 NH4(+). Its pathway is nitrogen metabolism; urea degradation; CO(2) and NH(3) from urea (urease route): step 1/1. This chain is Urease subunit alpha, found in Jannaschia sp. (strain CCS1).